Consider the following 198-residue polypeptide: Probable nicotinate-nucleotide adenylyltransferase (198 aa).

It belongs to the NadD family.

The enzyme catalyses nicotinate beta-D-ribonucleotide + ATP + H(+) = deamido-NAD(+) + diphosphate. It functions in the pathway cofactor biosynthesis; NAD(+) biosynthesis; deamido-NAD(+) from nicotinate D-ribonucleotide: step 1/1. Its function is as follows. Catalyzes the reversible adenylation of nicotinate mononucleotide (NaMN) to nicotinic acid adenine dinucleotide (NaAD). This is Probable nicotinate-nucleotide adenylyltransferase from Albidiferax ferrireducens (strain ATCC BAA-621 / DSM 15236 / T118) (Rhodoferax ferrireducens).